We begin with the raw amino-acid sequence, 875 residues long: Alanine--tRNA ligase (875 aa).

His-564, His-568, Cys-666, and His-670 together coordinate Zn(2+).

Belongs to the class-II aminoacyl-tRNA synthetase family. As to quaternary structure, homotetramer. It depends on Zn(2+) as a cofactor.

The protein localises to the cytoplasm. The catalysed reaction is tRNA(Ala) + L-alanine + ATP = L-alanyl-tRNA(Ala) + AMP + diphosphate. Catalyzes the attachment of alanine to tRNA(Ala) in a two-step reaction: alanine is first activated by ATP to form Ala-AMP and then transferred to the acceptor end of tRNA(Ala). Also edits incorrectly charged Ser-tRNA(Ala) and Gly-tRNA(Ala) via its editing domain. The chain is Alanine--tRNA ligase from Yersinia pestis bv. Antiqua (strain Angola).